We begin with the raw amino-acid sequence, 214 residues long: Probable GTP-binding protein EngB (214 aa).

The region spanning Asn-22 to Pro-194 is the EngB-type G domain. Residues Gly-30–Ser-37, Gly-57–Leu-61, Asp-75–Gly-78, Thr-142–Asp-145, and Phe-173–Ala-175 contribute to the GTP site. Mg(2+)-binding residues include Ser-37 and Thr-59.

This sequence belongs to the TRAFAC class TrmE-Era-EngA-EngB-Septin-like GTPase superfamily. EngB GTPase family. Mg(2+) serves as cofactor.

Its function is as follows. Necessary for normal cell division and for the maintenance of normal septation. This chain is Probable GTP-binding protein EngB, found in Citrifermentans bemidjiense (strain ATCC BAA-1014 / DSM 16622 / JCM 12645 / Bem) (Geobacter bemidjiensis).